The sequence spans 209 residues: Putative cardiolipin synthase (209 aa).

4 helical membrane passes run Ala27 to Phe47, Val82 to Leu102, Val126 to Leu146, and Leu157 to Val177.

Belongs to the CDP-alcohol phosphatidyltransferase class-I family.

It is found in the cell membrane. The catalysed reaction is a CDP-1,2-diacyl-sn-glycerol + a 1,2-diacyl-sn-glycero-3-phospho-(1'-sn-glycerol) = a cardiolipin + CMP + H(+). It participates in lipid metabolism; phospholipid metabolism. May catalyze the biosynthesis of cardiolipin from phosphatidylglycerol (PG) and CDP-diacylglycerol. The sequence is that of Putative cardiolipin synthase from Mycobacterium bovis (strain ATCC BAA-935 / AF2122/97).